The primary structure comprises 179 residues: Large ribosomal subunit protein uL5 (179 aa).

It belongs to the universal ribosomal protein uL5 family. As to quaternary structure, part of the 50S ribosomal subunit; part of the 5S rRNA/L5/L18/L25 subcomplex. Contacts the 5S rRNA and the P site tRNA. Forms a bridge to the 30S subunit in the 70S ribosome.

Its function is as follows. This is one of the proteins that bind and probably mediate the attachment of the 5S RNA into the large ribosomal subunit, where it forms part of the central protuberance. In the 70S ribosome it contacts protein S13 of the 30S subunit (bridge B1b), connecting the 2 subunits; this bridge is implicated in subunit movement. Contacts the P site tRNA; the 5S rRNA and some of its associated proteins might help stabilize positioning of ribosome-bound tRNAs. This chain is Large ribosomal subunit protein uL5, found in Enterococcus faecalis (strain ATCC 700802 / V583).